A 495-amino-acid polypeptide reads, in one-letter code: Chromosomal replication initiator protein DnaA (495 aa).

The segment at 1–91 (MTADPDPPFV…ITALSRHLGQ (91 aa)) is domain I, interacts with DnaA modulators. A domain II region spans residues 91-154 (QRVELGVRIA…TPAAEDPNAV (64 aa)). The tract at residues 155-371 (SLNRRYTFDT…GALIRVTAFA (217 aa)) is domain III, AAA+ region. 4 residues coordinate ATP: Gly-199, Gly-201, Lys-202, and Thr-203. The tract at residues 372-495 (SLNKTPIDKS…TTRIRQRAKR (124 aa)) is domain IV, binds dsDNA.

The protein belongs to the DnaA family. Oligomerizes as a right-handed, spiral filament on DNA at oriC.

It is found in the cytoplasm. Functionally, plays an essential role in the initiation and regulation of chromosomal replication. ATP-DnaA binds to the origin of replication (oriC) to initiate formation of the DNA replication initiation complex once per cell cycle. Binds the DnaA box (a 9 base pair repeat at the origin) and separates the double-stranded (ds)DNA. Forms a right-handed helical filament on oriC DNA; dsDNA binds to the exterior of the filament while single-stranded (ss)DNA is stabiized in the filament's interior. The ATP-DnaA-oriC complex binds and stabilizes one strand of the AT-rich DNA unwinding element (DUE), permitting loading of DNA polymerase. After initiation quickly degrades to an ADP-DnaA complex that is not apt for DNA replication. Binds acidic phospholipids. The chain is Chromosomal replication initiator protein DnaA from Mycobacterium sp. (strain JLS).